A 415-amino-acid polypeptide reads, in one-letter code: Maintenance of mitochondrial morphology protein 1 (415 aa).

Over 1-18 (MADICPSRSEPTLSFTQG) the chain is Lumenal. A helical membrane pass occupies residues 19–39 (LILGQLSVVLLLAAFIKFFIF). The Cytoplasmic segment spans residues 40 to 415 (GDPPSPEVVA…MPGSMPGSMP (376 aa)). Positions 114–330 (QPESLDWFNV…EPRFQEIALP (217 aa)) constitute an SMP-LTD domain. Over residues 373 to 389 (IEAEAHGGADRVPDSLR) the composition is skewed to basic and acidic residues. The segment at 373 to 415 (IEAEAHGGADRVPDSLRYRHRPRADEEFPGAGSMPGSMPGSMP) is disordered. Over residues 404-415 (GSMPGSMPGSMP) the composition is skewed to low complexity.

The protein belongs to the MMM1 family. In terms of assembly, homodimer. Component of the ER-mitochondria encounter structure (ERMES) or MDM complex, composed of mmm-1, mdm10, mdm12 and mdm34. A mmm-1 homodimer associates with one molecule of mdm12 on each side in a pairwise head-to-tail manner, and the SMP-LTD domains of mmm-1 and mdm12 generate a continuous hydrophobic tunnel for phospholipid trafficking.

It is found in the endoplasmic reticulum membrane. Functionally, component of the ERMES/MDM complex, which serves as a molecular tether to connect the endoplasmic reticulum (ER) and mitochondria. Components of this complex are involved in the control of mitochondrial shape and protein biogenesis, and function in nonvesicular lipid trafficking between the ER and mitochondria. The mdm12-mmm-1 subcomplex functions in the major beta-barrel assembly pathway that is responsible for biogenesis of all outer membrane beta-barrel proteins, and acts in a late step after the SAM complex. The mdm10-mdm12-mmm-1 subcomplex further acts in the TOM40-specific pathway after the action of the mdm12-mmm-1 complex. Essential for establishing and maintaining the structure of mitochondria and maintenance of mtDNA nucleoids. The polypeptide is Maintenance of mitochondrial morphology protein 1 (mmm-1) (Neurospora crassa (strain ATCC 24698 / 74-OR23-1A / CBS 708.71 / DSM 1257 / FGSC 987)).